A 281-amino-acid chain; its full sequence is Pantothenate synthetase (281 aa).

Residue 30–37 participates in ATP binding; the sequence is MGNLHAGH. Histidine 37 acts as the Proton donor in catalysis. Residue glutamine 61 participates in (R)-pantoate binding. A beta-alanine-binding site is contributed by glutamine 61. 149–152 lines the ATP pocket; the sequence is GRKD. Glutamine 155 contacts (R)-pantoate. Residues valine 178 and 186–189 contribute to the ATP site; that span reads MSSR.

Belongs to the pantothenate synthetase family. Homodimer.

It is found in the cytoplasm. It carries out the reaction (R)-pantoate + beta-alanine + ATP = (R)-pantothenate + AMP + diphosphate + H(+). It functions in the pathway cofactor biosynthesis; (R)-pantothenate biosynthesis; (R)-pantothenate from (R)-pantoate and beta-alanine: step 1/1. In terms of biological role, catalyzes the condensation of pantoate with beta-alanine in an ATP-dependent reaction via a pantoyl-adenylate intermediate. The sequence is that of Pantothenate synthetase from Shewanella amazonensis (strain ATCC BAA-1098 / SB2B).